The sequence spans 436 residues: Cysteine--tRNA ligase (436 aa).

Cys-24 provides a ligand contact to Zn(2+). Residues 26–36 (PTVYNHIHIGN) carry the 'HIGH' region motif. Residues Cys-202, His-227, and Glu-231 each coordinate Zn(2+). The 'KMSKS' region motif lies at 259 to 263 (KMSKS). ATP is bound at residue Lys-262.

It belongs to the class-I aminoacyl-tRNA synthetase family. In terms of assembly, monomer. The cofactor is Zn(2+).

It is found in the cytoplasm. The enzyme catalyses tRNA(Cys) + L-cysteine + ATP = L-cysteinyl-tRNA(Cys) + AMP + diphosphate. This is Cysteine--tRNA ligase from Ureaplasma parvum serovar 3 (strain ATCC 700970).